We begin with the raw amino-acid sequence, 166 residues long: 3-hydroxyacyl-[acyl-carrier-protein] dehydratase FabZ (166 aa).

The active site involves H72.

The protein belongs to the thioester dehydratase family. FabZ subfamily.

The protein localises to the cytoplasm. It carries out the reaction a (3R)-hydroxyacyl-[ACP] = a (2E)-enoyl-[ACP] + H2O. Involved in unsaturated fatty acids biosynthesis. Catalyzes the dehydration of short chain beta-hydroxyacyl-ACPs and long chain saturated and unsaturated beta-hydroxyacyl-ACPs. In Synechococcus sp. (strain JA-3-3Ab) (Cyanobacteria bacterium Yellowstone A-Prime), this protein is 3-hydroxyacyl-[acyl-carrier-protein] dehydratase FabZ.